Reading from the N-terminus, the 678-residue chain is WD repeat-containing protein 48 (678 aa).

WD repeat units lie at residues Tyr28 to Tyr67, His73 to Thr112, Thr115 to Ala154, Gly166 to Lys205, Gly208 to Thr247, Val250 to Leu289, Glu292 to Ser334, and Lys358 to Asp397. Residues Val608–Glu629 are disordered. Positions Thr610–Glu621 are enriched in low complexity.

It belongs to the WD repeat WDR48 family.

Its subcellular location is the nucleus. It is found in the cytoplasm. It localises to the lysosome. The protein localises to the late endosome. Regulator of deubiquitinating complexes, which acts as a strong activator of usp1, usp12 and usp46. Enhances the usp1-mediated deubiquitination of fancd2; usp1 being almost inactive by itself. Activates deubiquitination by increasing the catalytic turnover without increasing the affinity of deubiquitinating enzymes for the substrate. Also activates deubiquitinating activity of complexes containing usp12. Together with rad51ap1, promotes DNA repair by stimulating rad51-mediated homologous recombination. Binds single-stranded DNA (ssDNA) and double-stranded DNA (dsDNA). DNA-binding is required both for usp1-mediated deubiquitination of fancd2 and stimulation of rad51-mediated homologous recombination: both wdr48/uaf1 and rad51ap1 have coordinated role in DNA-binding during these processes. Together with atad5 and by regulating usp1 activity, has a role in pcna-mediated translesion synthesis (TLS) by deubiquitinating monoubiquitinated pcna. Together with atad5, has a role in recruiting rad51 to stalled forks during replication stress. In Xenopus tropicalis (Western clawed frog), this protein is WD repeat-containing protein 48 (wdr48).